We begin with the raw amino-acid sequence, 497 residues long: Putative glucuronosyltransferase PGSIP8 (497 aa).

Residues leucine 3–alanine 23 form a helical membrane-spanning segment. Mn(2+)-binding residues include aspartate 165 and aspartate 167. 5 helical membrane passes run tyrosine 319–valine 339, glycine 365–isoleucine 385, threonine 388–isoleucine 408, leucine 418–tryptophan 438, and glycine 442–valine 462.

It belongs to the glycosyltransferase 8 family. Glycogenin subfamily. It depends on Mn(2+) as a cofactor.

The protein resides in the membrane. The polypeptide is Putative glucuronosyltransferase PGSIP8 (PGSIP8) (Arabidopsis thaliana (Mouse-ear cress)).